The primary structure comprises 212 residues: uncharacterized protein (212 aa).

The disordered stretch occupies residues 97–151 (SDASEAKNDDRRSDGRFALYSVSDTPETTTASRSADRSTNPKTAKHPKSAAKPTV). Residues 100 to 111 (SEAKNDDRRSDG) show a composition bias toward basic and acidic residues.

This is an uncharacterized protein from Mycobacterium tuberculosis (strain CDC 1551 / Oshkosh).